The chain runs to 299 residues: ATP phosphoribosyltransferase (299 aa).

It belongs to the ATP phosphoribosyltransferase family. Long subfamily. In terms of assembly, equilibrium between an active dimeric form, an inactive hexameric form and higher aggregates. Interconversion between the various forms is largely reversible and is influenced by the natural substrates and inhibitors of the enzyme. The cofactor is Mg(2+).

It is found in the cytoplasm. The catalysed reaction is 1-(5-phospho-beta-D-ribosyl)-ATP + diphosphate = 5-phospho-alpha-D-ribose 1-diphosphate + ATP. The protein operates within amino-acid biosynthesis; L-histidine biosynthesis; L-histidine from 5-phospho-alpha-D-ribose 1-diphosphate: step 1/9. With respect to regulation, feedback inhibited by histidine. Catalyzes the condensation of ATP and 5-phosphoribose 1-diphosphate to form N'-(5'-phosphoribosyl)-ATP (PR-ATP). Has a crucial role in the pathway because the rate of histidine biosynthesis seems to be controlled primarily by regulation of HisG enzymatic activity. In Pectobacterium carotovorum subsp. carotovorum (strain PC1), this protein is ATP phosphoribosyltransferase.